We begin with the raw amino-acid sequence, 370 residues long: Dual-specificity RNA methyltransferase RlmN (370 aa).

Catalysis depends on Glu-93, which acts as the Proton acceptor. Residues Glu-99–Asp-337 enclose the Radical SAM core domain. A disulfide bridge links Cys-106 with Cys-343. [4Fe-4S] cluster contacts are provided by Cys-113, Cys-117, and Cys-120. S-adenosyl-L-methionine-binding positions include Gly-167–Glu-168, Ser-199, Ser-221–His-223, and Asn-300. Catalysis depends on Cys-343, which acts as the S-methylcysteine intermediate.

This sequence belongs to the radical SAM superfamily. RlmN family. It depends on [4Fe-4S] cluster as a cofactor.

It is found in the cytoplasm. It catalyses the reaction adenosine(2503) in 23S rRNA + 2 reduced [2Fe-2S]-[ferredoxin] + 2 S-adenosyl-L-methionine = 2-methyladenosine(2503) in 23S rRNA + 5'-deoxyadenosine + L-methionine + 2 oxidized [2Fe-2S]-[ferredoxin] + S-adenosyl-L-homocysteine. It carries out the reaction adenosine(37) in tRNA + 2 reduced [2Fe-2S]-[ferredoxin] + 2 S-adenosyl-L-methionine = 2-methyladenosine(37) in tRNA + 5'-deoxyadenosine + L-methionine + 2 oxidized [2Fe-2S]-[ferredoxin] + S-adenosyl-L-homocysteine. Functionally, specifically methylates position 2 of adenine 2503 in 23S rRNA and position 2 of adenine 37 in tRNAs. m2A2503 modification seems to play a crucial role in the proofreading step occurring at the peptidyl transferase center and thus would serve to optimize ribosomal fidelity. This chain is Dual-specificity RNA methyltransferase RlmN, found in Francisella tularensis subsp. holarctica (strain LVS).